Reading from the N-terminus, the 934-residue chain is Bifunctional uridylyltransferase/uridylyl-removing enzyme (934 aa).

The tract at residues 1 to 379 (MSAHDLKLEE…TFSRRKRKLS (379 aa)) is uridylyltransferase. The tract at residues 380–736 (ADGDFVSENH…AKPHTFEAVT (357 aa)) is uridylyl-removing. In terms of domain architecture, HD spans 496 to 613 (VDEHLLRCIA…IDFADTVQTM (118 aa)). 2 ACT domains span residues 737–819 (EITV…VLAK) and 848–931 (VIEV…RSSQ).

Belongs to the GlnD family. Mg(2+) is required as a cofactor.

It catalyses the reaction [protein-PII]-L-tyrosine + UTP = [protein-PII]-uridylyl-L-tyrosine + diphosphate. The catalysed reaction is [protein-PII]-uridylyl-L-tyrosine + H2O = [protein-PII]-L-tyrosine + UMP + H(+). Its activity is regulated as follows. Uridylyltransferase (UTase) activity is inhibited by glutamine, while glutamine activates uridylyl-removing (UR) activity. Functionally, modifies, by uridylylation and deuridylylation, the PII regulatory proteins (GlnB and homologs), in response to the nitrogen status of the cell that GlnD senses through the glutamine level. Under low glutamine levels, catalyzes the conversion of the PII proteins and UTP to PII-UMP and PPi, while under higher glutamine levels, GlnD hydrolyzes PII-UMP to PII and UMP (deuridylylation). Thus, controls uridylylation state and activity of the PII proteins, and plays an important role in the regulation of nitrogen assimilation and metabolism. The protein is Bifunctional uridylyltransferase/uridylyl-removing enzyme of Brucella anthropi (strain ATCC 49188 / DSM 6882 / CCUG 24695 / JCM 21032 / LMG 3331 / NBRC 15819 / NCTC 12168 / Alc 37) (Ochrobactrum anthropi).